We begin with the raw amino-acid sequence, 235 residues long: Lipoprotein-releasing system ATP-binding protein LolD 1 (235 aa).

Positions 5–234 (FEARGITKSY…DGRLQLCTPL (230 aa)) constitute an ABC transporter domain. Residue 42–49 (GASGSGKT) participates in ATP binding.

Belongs to the ABC transporter superfamily. Lipoprotein translocase (TC 3.A.1.125) family. As to quaternary structure, the complex is composed of two ATP-binding proteins (LolD) and two transmembrane proteins (LolC and LolE).

It is found in the cell inner membrane. In terms of biological role, part of the ABC transporter complex LolCDE involved in the translocation of mature outer membrane-directed lipoproteins, from the inner membrane to the periplasmic chaperone, LolA. Responsible for the formation of the LolA-lipoprotein complex in an ATP-dependent manner. In Chlorobium luteolum (strain DSM 273 / BCRC 81028 / 2530) (Pelodictyon luteolum), this protein is Lipoprotein-releasing system ATP-binding protein LolD 1.